The following is a 186-amino-acid chain: Casparian strip membrane protein 5 (186 aa).

Residues 1-23 are Cytoplasmic-facing; the sequence is MEHGEISSKAPLVAPVAAGVNRA. A helical membrane pass occupies residues 24–44; sequence VAVVDTFLRFIAIIGTIGSAI. The Extracellular segment spans residues 45-73; the sequence is AMGTTNETLPFFTQFIQFEAKYSDLPSFT. N-linked (GlcNAc...) asparagine glycosylation is present at asparagine 50. A helical membrane pass occupies residues 74–94; it reads FFVAANAVVCTYLVLSIPLSI. Residues 95 to 106 lie on the Cytoplasmic side of the membrane; the sequence is VHILRPRARYSR. A helical membrane pass occupies residues 107–127; sequence LFLVFFDTAMLALLTAGASAA. Residues 128–160 lie on the Extracellular side of the membrane; that stretch reads AAIVYLAHKGNVRANWFSICQQFDSFCERISGS. A helical membrane pass occupies residues 161-181; the sequence is LIGSFAAMVLLVVLITLSAFA. Topologically, residues 182–186 are cytoplasmic; sequence LARRH.

It belongs to the Casparian strip membrane proteins (CASP) family. Homodimer and heterodimers.

It localises to the cell membrane. In terms of biological role, regulates membrane-cell wall junctions and localized cell wall deposition. Required for establishment of the Casparian strip membrane domain (CSD) and the subsequent formation of Casparian strips, a cell wall modification of the root endodermis that determines an apoplastic barrier between the intraorganismal apoplasm and the extraorganismal apoplasm and prevents lateral diffusion. The polypeptide is Casparian strip membrane protein 5 (Oryza sativa subsp. japonica (Rice)).